A 339-amino-acid polypeptide reads, in one-letter code: MTQAQTATVQPDAIPVAAPASQRWRVADVVALFELPFNDLIFRAQQVHREHFDANAVQLSTLLSIKTGGCEEDCGYCSQSSHHDTGLKAEKLMDVDAVLDAARAAKANGASRFCMGAAWRNPKERHMPALTEMVRGVKELGLETCMTLGMLEDEQAQELANAGLDYYNHNLDTSPEFYGQVISTRTYQDRLDTLDRVRDAGINVCCGGIIGMGESRRERAGLISQLANLNPYPDSVPINNLVAIEGTPLEGTAPLDPFEFVRTIAVARITMPKAVVRLSAGREQLDDGLQAMCFLAGANSMFYGDQLLTTSNPQSQKDRALFERLGIRASDADAMQANA.

The Radical SAM core domain occupies 55–282; that stretch reads NAVQLSTLLS…KAVVRLSAGR (228 aa). [4Fe-4S] cluster is bound by residues cysteine 70, cysteine 74, and cysteine 77. The [2Fe-2S] cluster site is built by cysteine 114, cysteine 145, cysteine 205, and arginine 277.

The protein belongs to the radical SAM superfamily. Biotin synthase family. As to quaternary structure, homodimer. The cofactor is [4Fe-4S] cluster. Requires [2Fe-2S] cluster as cofactor.

The catalysed reaction is (4R,5S)-dethiobiotin + (sulfur carrier)-SH + 2 reduced [2Fe-2S]-[ferredoxin] + 2 S-adenosyl-L-methionine = (sulfur carrier)-H + biotin + 2 5'-deoxyadenosine + 2 L-methionine + 2 oxidized [2Fe-2S]-[ferredoxin]. It functions in the pathway cofactor biosynthesis; biotin biosynthesis; biotin from 7,8-diaminononanoate: step 2/2. Functionally, catalyzes the conversion of dethiobiotin (DTB) to biotin by the insertion of a sulfur atom into dethiobiotin via a radical-based mechanism. The sequence is that of Biotin synthase from Burkholderia ambifaria (strain ATCC BAA-244 / DSM 16087 / CCUG 44356 / LMG 19182 / AMMD) (Burkholderia cepacia (strain AMMD)).